A 943-amino-acid polypeptide reads, in one-letter code: UvrABC system protein A (943 aa).

32–39 is an ATP binding site; the sequence is GLSGSGKS. A C4-type zinc finger spans residues 251 to 278; it reads CPVCGFTVPELEPRLFSFNAPFGSCPTC. ABC transporter domains follow at residues 308 to 589 and 609 to 937; these read WNPI…KKSI and GSGR…QYLK. ATP is bound at residue 641–648; it reads GVSGSGKS. The C4-type zinc finger occupies 740–766; the sequence is CEACSGDGIIKIEMHFLPDVYVPCEVC.

Belongs to the ABC transporter superfamily. UvrA family. Forms a heterotetramer with UvrB during the search for lesions.

Its subcellular location is the cytoplasm. In terms of biological role, the UvrABC repair system catalyzes the recognition and processing of DNA lesions. UvrA is an ATPase and a DNA-binding protein. A damage recognition complex composed of 2 UvrA and 2 UvrB subunits scans DNA for abnormalities. When the presence of a lesion has been verified by UvrB, the UvrA molecules dissociate. The polypeptide is UvrABC system protein A (Streptococcus mutans serotype c (strain ATCC 700610 / UA159)).